Here is a 355-residue protein sequence, read N- to C-terminus: Vacuolar protein sorting-associated protein 37C (355 aa).

Phosphoserine is present on Ser29. Positions 78–167 constitute a VPS37 C-terminal domain; sequence VERCQEQKAK…RKPRASQELA (90 aa). The interval 159 to 355 is disordered; it reads KPRASQELAG…PPPGPAWPGY (197 aa). Composition is skewed to pro residues over residues 170-186 and 194-205; these read APPPRPPPPVRPVPQGT and PQPPSAMPPYPL. The segment covering 246–257 has biased composition (low complexity); sequence PAAQPGPRGAAG. A compositionally biased stretch (pro residues) spans 321 to 355; the sequence is PGQPQPSVPLQPPYPPGPAPPYGFPPPPGPAWPGY.

This sequence belongs to the VPS37 family. Component of the ESCRT-I complex (endosomal sorting complex required for transport I) which consists of TSG101, VPS28, a VPS37 protein (VPS37A to -D) and MVB12A or MVB12B in a 1:1:1:1 stoichiometry. Interacts with TSG101, VPS28, MVB12A and MVB12B. Component of the ESCRT-I complex (endosomal sorting complex required for transport I) which consists of TSG101, VPS28, a VPS37 protein (VPS37A to -D) and UBAP1 in a 1:1:1:1 stoichiometry. Interacts with HGS and STAM2. Interacts with CEP55. In terms of processing, phosphorylated by TBK1.

Its subcellular location is the late endosome membrane. In terms of biological role, component of the ESCRT-I complex, a regulator of vesicular trafficking process. Required for the sorting of endocytic ubiquitinated cargos into multivesicular bodies. May be involved in cell growth and differentiation. In Pongo abelii (Sumatran orangutan), this protein is Vacuolar protein sorting-associated protein 37C (VPS37C).